The chain runs to 683 residues: MGISLSVLDIKIISTTVLFILSLLAGIAPYWMRNLNNSSRYLSWSNTFAGGVFFGAGMLHLFATADEDLQPYVQKYNYPFAALCLCVGFLITLFLELIINSIFIKSNTFASLHGHSHSHVHLSHGHSHHGKDNGSNGNPGSGVGIGMGSVGALNSKKNKTTSPTITPTTPSEGTTTTTTTTTATTAATAKEIVLEDEDEDEEKDIMDEIIIPDDYDENDDEQIYKKKQSKCARTKFRKFIDTIPTFSSTSTSSTSSSTKISEKQRLLDSSNSYYYNQNKYKGIIGSHIDIDKSGSGVGGFSNNNNNNNNNNNNNNKNNNNNNNNNFRTEIIIQPISTTSNNSVHHYPSSSVNYHPFITTTTTTCSNDNSNSNNNNSSNNNSSSANITPNTNKILSSSKSLSYRYNGDDEEPDIIIDYDDIDYNQEGRTRGNSLGSDSNVHNERIVLINSGIGNSGNIGSNNNNNNNGGGGGGGGNSNIDYNDNEENNNNNNKIESEILIKDTTTDSIKNMKGGEHQHQHLHQQEIIVVTKKSNILLPFILVIALSIHSLFEGLAMGVQSSEIRVFDILIAIFAHKILASFALGISTITSSNEKPSFLKLFLLVFVFSLTSPIGSILGMVIVGSGVTGSMVPPILQGIASGTFLYVAVVEIIPKELSHDSNDILIKSFLLLLGFSGMAVVAIWV.

3 helical membrane-spanning segments follow: residues 12-32, 42-62, and 79-99; these read IIST…PYWM, LSWS…LHLF, and PFAA…ELII. The segment covering 120–129 has biased composition (basic residues); the sequence is VHLSHGHSHH. 4 disordered regions span residues 120-180, 299-325, 364-390, and 451-489; these read VHLS…TTTT, GFSN…NNNN, CSND…TPNT, and IGNS…NNNN. Residues 137–149 are compositionally biased toward gly residues; the sequence is GNPGSGVGIGMGS. 2 stretches are compositionally biased toward low complexity: residues 160–180 and 302–325; these read TTSP…TTTT and NNNN…NNNN. Residues 451–465 show a composition bias toward low complexity; it reads IGNSGNIGSNNNNNN. The span at 466–475 shows a compositional bias: gly residues; that stretch reads NGGGGGGGGN. Over residues 476 to 489 the composition is skewed to low complexity; sequence SNIDYNDNEENNNN. A run of 5 helical transmembrane segments spans residues 534–554, 564–584, 600–620, 631–651, and 662–682; these read ILLP…EGLA, VFDI…ALGI, FLLV…GMVI, PPIL…VEII, and ILIK…VAIW.

It belongs to the ZIP transporter (TC 2.A.5) family.

The protein resides in the membrane. Its function is as follows. May transport divalent cations. May participate, with dstA, in the regulation of the differentiation of stalk cells during development. In Dictyostelium discoideum (Social amoeba), this protein is Protein zntD (zntD).